The chain runs to 301 residues: Probable alpha-L-glutamate ligase (301 aa).

One can recognise an ATP-grasp domain in the interval 104–287; the sequence is LQLLSRKGIG…VAGMIVEFIE (184 aa). ATP contacts are provided by residues lysine 141, 178–179, aspartate 187, and 211–213; these read EF and RSN. Positions 248, 260, and 262 each coordinate Mg(2+). 3 residues coordinate Mn(2+): aspartate 248, glutamate 260, and asparagine 262.

It belongs to the RimK family. Mg(2+) serves as cofactor. It depends on Mn(2+) as a cofactor.

The chain is Probable alpha-L-glutamate ligase from Teredinibacter turnerae (strain ATCC 39867 / T7901).